We begin with the raw amino-acid sequence, 63 residues long: Insect toxin TbIT-1 (63 aa).

One can recognise an LCN-type CS-alpha/beta domain in the interval 2–63 (KEGYPVDSRG…VYDNASNKCB (62 aa)). Disulfide bonds link cysteine 12–cysteine 62, cysteine 16–cysteine 38, cysteine 24–cysteine 43, and cysteine 28–cysteine 45.

It belongs to the long (4 C-C) scorpion toxin superfamily. Sodium channel inhibitor family. Beta subfamily. As to expression, expressed by the venom gland.

The protein resides in the secreted. Functionally, beta toxins bind voltage-independently at site-4 of sodium channels (Nav) and shift the voltage of activation toward more negative potentials thereby affecting sodium channel activation and promoting spontaneous and repetitive firing. This toxin is only active against insects. This Tityus bahiensis (Brazilian scorpion) protein is Insect toxin TbIT-1.